Reading from the N-terminus, the 301-residue chain is Acetylglutamate kinase (301 aa).

Residues 72–73, R94, and N199 contribute to the substrate site; that span reads GG.

This sequence belongs to the acetylglutamate kinase family. ArgB subfamily.

Its subcellular location is the cytoplasm. It catalyses the reaction N-acetyl-L-glutamate + ATP = N-acetyl-L-glutamyl 5-phosphate + ADP. The protein operates within amino-acid biosynthesis; L-arginine biosynthesis; N(2)-acetyl-L-ornithine from L-glutamate: step 2/4. Catalyzes the ATP-dependent phosphorylation of N-acetyl-L-glutamate. In Azorhizobium caulinodans (strain ATCC 43989 / DSM 5975 / JCM 20966 / LMG 6465 / NBRC 14845 / NCIMB 13405 / ORS 571), this protein is Acetylglutamate kinase.